We begin with the raw amino-acid sequence, 420 residues long: D-tagatose-1,6-bisphosphate aldolase subunit GatZ (420 aa).

Belongs to the GatZ/KbaZ family. GatZ subfamily. Forms a complex with GatY.

It functions in the pathway carbohydrate metabolism; D-tagatose 6-phosphate degradation; D-glyceraldehyde 3-phosphate and glycerone phosphate from D-tagatose 6-phosphate: step 2/2. Functionally, component of the tagatose-1,6-bisphosphate aldolase GatYZ that is required for full activity and stability of the Y subunit. Could have a chaperone-like function for the proper and stable folding of GatY. When expressed alone, GatZ does not show any aldolase activity. Is involved in the catabolism of galactitol. This is D-tagatose-1,6-bisphosphate aldolase subunit GatZ from Escherichia coli O9:H4 (strain HS).